The chain runs to 616 residues: Dihydroxy-acid dehydratase (616 aa).

Asp81 contributes to the Mg(2+) binding site. A [2Fe-2S] cluster-binding site is contributed by Cys122. Mg(2+) contacts are provided by Asp123 and Lys124. Lys124 carries the post-translational modification N6-carboxylysine. Cys195 is a binding site for [2Fe-2S] cluster. Mg(2+) is bound at residue Glu491. Ser517 functions as the Proton acceptor in the catalytic mechanism.

It belongs to the IlvD/Edd family. In terms of assembly, homodimer. [2Fe-2S] cluster serves as cofactor. It depends on Mg(2+) as a cofactor.

The catalysed reaction is (2R)-2,3-dihydroxy-3-methylbutanoate = 3-methyl-2-oxobutanoate + H2O. It carries out the reaction (2R,3R)-2,3-dihydroxy-3-methylpentanoate = (S)-3-methyl-2-oxopentanoate + H2O. It functions in the pathway amino-acid biosynthesis; L-isoleucine biosynthesis; L-isoleucine from 2-oxobutanoate: step 3/4. It participates in amino-acid biosynthesis; L-valine biosynthesis; L-valine from pyruvate: step 3/4. Functionally, functions in the biosynthesis of branched-chain amino acids. Catalyzes the dehydration of (2R,3R)-2,3-dihydroxy-3-methylpentanoate (2,3-dihydroxy-3-methylvalerate) into 2-oxo-3-methylpentanoate (2-oxo-3-methylvalerate) and of (2R)-2,3-dihydroxy-3-methylbutanoate (2,3-dihydroxyisovalerate) into 2-oxo-3-methylbutanoate (2-oxoisovalerate), the penultimate precursor to L-isoleucine and L-valine, respectively. This Pectobacterium atrosepticum (strain SCRI 1043 / ATCC BAA-672) (Erwinia carotovora subsp. atroseptica) protein is Dihydroxy-acid dehydratase.